Here is a 389-residue protein sequence, read N- to C-terminus: Chalcone synthase 1 (389 aa).

The active site involves Cys164.

It belongs to the thiolase-like superfamily. Chalcone/stilbene synthases family.

The enzyme catalyses (E)-4-coumaroyl-CoA + 3 malonyl-CoA + 3 H(+) = 2',4,4',6'-tetrahydroxychalcone + 3 CO2 + 4 CoA. The protein operates within secondary metabolite biosynthesis; flavonoid biosynthesis. Its function is as follows. The primary product of this enzyme is 4,2',4',6'-tetrahydroxychalcone (also termed naringenin-chalcone or chalcone) which can under specific conditions spontaneously isomerize into naringenin. This is Chalcone synthase 1 (CHS1) from Trifolium subterraneum (Subterranean clover).